The primary structure comprises 851 residues: MAPMAMDHLCFVLPTESGELKPPVMVEETTEEEEEKKSRDCGRQVVSLIGDLFRRLHGSKLVKSLNLCSINESKDSISMEINKSFTDMEGVQLSSKVGCENPRIFGYSELYIGTNGFSDELILGSGGFGRVYKALLPSDGTTVAVKCLAEKKGEQFEKTFAAELVAVAQLRHRNLVKLRGWCLHEDELLLVYDYMPNRSLDRVLFRRPEVNSDFKPLDWDRRGKIVKGLAAALFYLHEQLETQIIHRDVKTSNVMLDSEFNAKLGDFGLARWLEHKIDETEHDSSYDSVSSFRNHQFRVADSTRIGGTIGYLPPESFRKKTVATAKTDVFSFGVVVLEVVSGRRAVDLSFSEDKIILLDWVRRLSDNRKLLDAGDSRLAKGSYDLSDMKRMIHLALLCSLNNPTHRPNMKWVIGALSGEFSGNLPALPSFKSHPLYIPLSSLKSTSTSATTTTTRTTMTTTTSTTSFNASSESTPSSNYVTALEDSIYQTAETGENPYFNYNSRRVMSSKSFVLDTPREISYNDLVLATDNFSDARRVAEVDFGTAYYGLLNGDQHIVVKRLGMTKCPALVTRFSTELLNLGRLRHRNLVMLRGWCTEHGEMLVVYDYSANRKLSHLLFHNHIPGNSVLRWKSRYNVIKSLACAVRYLHEEWDEQVIHRNITSSTIFLDRDMNPRLCGFALAEFLSRNDKAHQAAKKKGSAQGIFGYMAPEYMESGEATTMADVYSFGVVVLEMVTGQPAVDYKRKKEDALMVLRIREVVGNRKKLLEEIADIHLDDEYENRELARLLRLGLVCTRTDPKLRPSISQVVSILDGSERFFEEEGGKEGDVSRKQMYDSSMLMIRQMQALGIH.

Residues 117-436 form the Protein kinase 1 domain; it reads FSDELILGSG…LPSFKSHPLY (320 aa). ATP contacts are provided by residues 123 to 131 and K146; that span reads LGSGGFGRV. The active-site Proton acceptor is D248. The disordered stretch occupies residues 448–471; it reads SATTTTTRTTMTTTTSTTSFNASS. A Protein kinase 2 domain is found at 532 to 819; sequence FSDARRVAEV…SILDGSERFF (288 aa). ATP-binding positions include 538-546 and K560; that span reads VAEVDFGTA.

It belongs to the protein kinase superfamily. Ser/Thr protein kinase family.

The catalysed reaction is L-seryl-[protein] + ATP = O-phospho-L-seryl-[protein] + ADP + H(+). It carries out the reaction L-threonyl-[protein] + ATP = O-phospho-L-threonyl-[protein] + ADP + H(+). The protein is Receptor like protein kinase S.2 (LECRKS2) of Arabidopsis thaliana (Mouse-ear cress).